Reading from the N-terminus, the 720-residue chain is Calcium/calmodulin-dependent protein kinase type II (720 aa).

Residues 12-269 (YDVKEELGKG…ADQALKVPWI (258 aa)) enclose the Protein kinase domain. ATP is bound by residues 18–26 (LGKGAFSVV) and Lys-41. Asp-134 acts as the Proton acceptor in catalysis. Thr-284 carries the post-translational modification Phosphothreonine; by autocatalysis. 2 disordered regions span residues 317–345 (SDST…QPTS) and 504–586 (DNLS…NLSA). Polar residues-rich tracts occupy residues 504–514 (DNLSASTSSDL) and 526–540 (PPST…SQTI). The span at 569–586 (SSSNSSTASKSSSTNLSA) shows a compositional bias: low complexity.

Belongs to the protein kinase superfamily. CAMK Ser/Thr protein kinase family. CaMK subfamily. As to quaternary structure, dodecamer. Subunits are tightly packed around a central ring-shaped scaffold with extensive contacts between the regulatory segment of one kinase and the catalytic domain of another enabling cooperative activation of a subunit by the adjacent molecule. Interacts with and phosphorylates daf-16; the interaction promotes daf-16 nuclear localization. Interacts with egl-2 and tir-1. Interacts with nsy-1. Mg(2+) is required as a cofactor. In terms of tissue distribution, expressed in the nervous system. Observed in the ADF and AWC neurons. Position in AWC neurons is regulated by microtubules. Localized to clusters in ventral cord neurites which appear to be required for glr-1 trafficking. Also present in oocytes.

Its subcellular location is the cytoplasm. The protein resides in the cell projection. It is found in the axon. It localises to the perikaryon. The enzyme catalyses L-seryl-[protein] + ATP = O-phospho-L-seryl-[protein] + ADP + H(+). It carries out the reaction L-threonyl-[protein] + ATP = O-phospho-L-threonyl-[protein] + ADP + H(+). Its activity is regulated as follows. Ca2(+)/calmodulin binding removes an autoinhibitory regulatory segment located C-terminal to the kinase domain. This releases the catalytic activity of the enzyme and makes accessible a regulatory residue Thr-284. Phosphorylation of Thr-284 by another kinase domain within the oligomeric holoenzyme keeps CaMKII active in the absence of Ca(2+)/calmodulin by preventing the rebinding of the regulatory segment to the kinase domain and by increasing the affinity of calmodulin for the enzyme. Can respond to high-frequency Ca(2+) pulses to become Ca(2+) independent. Functionally, acts in the signaling of a variety of pathways and processes. Phosphorylates 'Ser-319' of daf-16 in response to stress signals, such as heat, starvation and oxidation, which plays a role in prolonging lifespan. Required for viability under chronic osmotic stress in which it acts downstream of osr-1. Has roles in locomotion, oocyte maturation, brood size, egg laying, defecation, meiotic maturation and neuronal cell fate specification. Required for the regulation of synaptic density and neuromuscular junction morphology. Regulates the synaptic trafficking of glr-1. Bidirectional modulator of neurotransmitter release with negative modulatory effects mainly mediated via slo-1 activation. Involved in activation of ADF neurons and increased tph-1 transcription following exposure to pathogenic bacteria which leads to learned olfactory aversion to the bacteria. Implicated in the muscle regulation of spicule protraction. In conjunction with egl-2 has a role in the suppression of mating behavior under food deprivation to encourage foraging. Involved in restricting str-2 expression to only one of the two AWC neurons. May suppress the functional response to an internal pacemaker, perhaps by modulating the activity of the IP3 receptor. The polypeptide is Calcium/calmodulin-dependent protein kinase type II (unc-43) (Caenorhabditis elegans).